A 507-amino-acid polypeptide reads, in one-letter code: Cytochrome P450 monooxygenase nodZ (507 aa).

2 consecutive transmembrane segments (helical) span residues 1–21 (MITASTSVFGGLILAFIFSLL) and 205–225 (GFLHCMAIAGTILGAVTPWFL). An N-linked (GlcNAc...) asparagine glycan is attached at asparagine 352. Residue cysteine 445 coordinates heme.

This sequence belongs to the cytochrome P450 family. Heme is required as a cofactor.

It localises to the membrane. It participates in secondary metabolite biosynthesis. In terms of biological role, cytochrome P450 monooxygenase; part of the gene cluster that mediates the biosynthesis of the indole diterpenes nodulisporic acids (NA). Nodulisporic acid A (NAA) and its chemically modified derivatives are of particular significance because of their highly potent insecticidal activity against blood-feeding arthropods and lack of observable adverse effects on mammals, in particular the tremogenicity associated with the paspaline-derived IDTs is not observed. The geranylgeranyl diphosphate (GGPP) synthase ggs1, localized outside of the cluster, is proposed to catalyze the first step in nodulisporic acid biosynthesis via conversion of farnesyl pyrophosphate and isopentyl pyrophosphate into geranylgeranyl pyrophosphate (GGPP). Condensation of indole-3-glycerol phosphate with GGPP by the prenyl transferase nodC then forms 3-geranylgeranylindole (3-GGI). Epoxidation by the FAD-dependent monooxygenase nodM leads to a single-epoxidized-GGI that is substrate of the terpene cyclase nodB for cyclization to yield emindole SB. The terminal methyl carbon, C28, of emindole SB is then oxidized by the cytochrome P450 monooxygenase nodW to produce nodulisporic acid F (NAF), the pentacyclic core of NAA. NAF is converted to nodulisporic acid E (NAE) via prenylation. This step is probably performed by one of the indole diterpene prenyltransferases nodD1 or nodD2. Several oxidation steps performed by the FAD-linked oxidoreductase nodO and one of the cytochrome P450 monooxygenase nodR, nodX or nodZ further convert NAE to nodulisporic acid D (NAD). NAD is substrate of cytochrome P450 monooxygenase nodJ to produce the precursor of nodulisporic acid C (NAC), converted to NAC by one of the indole diterpene prenyltransferases nodD1 or nodD2. The FAD-dependent monooxygenase nodY2 then oxidizes NAC to nodulisporic acid B (NAB). Finally NAB is converted to NAA by one of the cytochrome P450 monooxygenases nodR, nodX or nodZ. The chain is Cytochrome P450 monooxygenase nodZ from Hypoxylon pulicicidum.